The sequence spans 316 residues: Protoheme IX farnesyltransferase (316 aa).

The next 9 helical transmembrane spans lie at 32–52, 53–73, 93–113, 116–136, 152–172, 180–200, 221–241, 252–271, and 289–309; these read VMSL…GHIH, PVLG…SGAL, IPAG…LSGF, VILG…TIFF, NIVI…ACVT, TVLF…LALF, VTKH…VLPS, LVAA…VWRM, and IFYL…PVLV.

Belongs to the UbiA prenyltransferase family. Protoheme IX farnesyltransferase subfamily.

The protein resides in the cell inner membrane. It catalyses the reaction heme b + (2E,6E)-farnesyl diphosphate + H2O = Fe(II)-heme o + diphosphate. It functions in the pathway porphyrin-containing compound metabolism; heme O biosynthesis; heme O from protoheme: step 1/1. Its function is as follows. Converts heme B (protoheme IX) to heme O by substitution of the vinyl group on carbon 2 of heme B porphyrin ring with a hydroxyethyl farnesyl side group. This chain is Protoheme IX farnesyltransferase, found in Rhizobium johnstonii (strain DSM 114642 / LMG 32736 / 3841) (Rhizobium leguminosarum bv. viciae).